Reading from the N-terminus, the 399-residue chain is Enoyl-[acyl-carrier-protein] reductase [NADH] (399 aa).

Residues 48–53, 74–75, 111–112, and 139–140 each bind NAD(+); these read GASTGY, FE, DA, and LA. A substrate-binding site is contributed by tyrosine 225. Tyrosine 235 serves as the catalytic Proton donor. Residues lysine 244 and 274–276 contribute to the NAD(+) site; that span reads VVT.

It belongs to the TER reductase family. As to quaternary structure, monomer.

The enzyme catalyses a 2,3-saturated acyl-[ACP] + NAD(+) = a (2E)-enoyl-[ACP] + NADH + H(+). Its pathway is lipid metabolism; fatty acid biosynthesis. Involved in the final reduction of the elongation cycle of fatty acid synthesis (FAS II). Catalyzes the reduction of a carbon-carbon double bond in an enoyl moiety that is covalently linked to an acyl carrier protein (ACP). This is Enoyl-[acyl-carrier-protein] reductase [NADH] from Erwinia tasmaniensis (strain DSM 17950 / CFBP 7177 / CIP 109463 / NCPPB 4357 / Et1/99).